The chain runs to 513 residues: Glucose-1-phosphate adenylyltransferase small subunit, chloroplastic/amyloplastic (513 aa).

A chloroplast-targeting transit peptide spans 1–64 (MAMAAAASPS…RRPFFFSPRA (64 aa)).

Belongs to the bacterial/plant glucose-1-phosphate adenylyltransferase family. Heterotetramer. As to expression, leaves and starchy endosperm.

The protein resides in the plastid. It localises to the chloroplast. It is found in the amyloplast. The enzyme catalyses alpha-D-glucose 1-phosphate + ATP + H(+) = ADP-alpha-D-glucose + diphosphate. The protein operates within glycan biosynthesis; starch biosynthesis. Its activity is regulated as follows. Activated by 3'phosphoglycerate, inhibited by orthophosphate. Allosteric regulation. Its function is as follows. This protein plays a role in synthesis of starch. It catalyzes the synthesis of the activated glycosyl donor, ADP-glucose from Glc-1-P and ATP. This is Glucose-1-phosphate adenylyltransferase small subunit, chloroplastic/amyloplastic from Hordeum vulgare (Barley).